An 88-amino-acid chain; its full sequence is Small ribosomal subunit protein uS15 (88 aa).

It belongs to the universal ribosomal protein uS15 family. In terms of assembly, part of the 30S ribosomal subunit. Forms a bridge to the 50S subunit in the 70S ribosome, contacting the 23S rRNA.

Its function is as follows. One of the primary rRNA binding proteins, it binds directly to 16S rRNA where it helps nucleate assembly of the platform of the 30S subunit by binding and bridging several RNA helices of the 16S rRNA. Forms an intersubunit bridge (bridge B4) with the 23S rRNA of the 50S subunit in the ribosome. The chain is Small ribosomal subunit protein uS15 from Borrelia hermsii (strain HS1 / DAH).